Here is a 201-residue protein sequence, read N- to C-terminus: Myosin regulatory light chain 2 (201 aa).

The interval 1–48 (MADKDKKVKKKKAKEDAPAEEAPAAAAPAGDRQSSRGSRKAKRTGSNV) is disordered. Residues 20-29 (EEAPAAAAPA) show a composition bias toward low complexity. Position 46 is a phosphoserine (serine 46). EF-hand domains follow at residues 55–90 (KQVA…LGRL), 125–158 (DEDD…WGDK), and 159–194 (FSAD…SAEE). Ca(2+) contacts are provided by aspartate 68, aspartate 70, aspartate 72, and aspartate 79.

As to quaternary structure, myosin is a hexamer of 2 heavy chains and 4 light chains.

The polypeptide is Myosin regulatory light chain 2 (Bombyx mori (Silk moth)).